Here is a 127-residue protein sequence, read N- to C-terminus: Fluoride-specific ion channel FluC (127 aa).

Transmembrane regions (helical) follow at residues 4-24 (LLLA…FLSM), 35-55 (LGTL…LAWF), 71-91 (TGFC…VFLL), and 103-123 (IAVN…LFSA). Na(+) is bound by residues Gly75 and Thr78.

This sequence belongs to the fluoride channel Fluc/FEX (TC 1.A.43) family.

The protein localises to the cell inner membrane. The catalysed reaction is fluoride(in) = fluoride(out). Na(+) is not transported, but it plays an essential structural role and its presence is essential for fluoride channel function. Its function is as follows. Fluoride-specific ion channel. Important for reducing fluoride concentration in the cell, thus reducing its toxicity. The polypeptide is Fluoride-specific ion channel FluC (Enterobacter sp. (strain 638)).